Reading from the N-terminus, the 421-residue chain is Probable UDP-arabinose 4-epimerase 1 (421 aa).

Topologically, residues 1–33 (MLPTNRNRPQQRPARSWYFISDMDFSDPKRKPR) are cytoplasmic. A helical; Signal-anchor for type II membrane protein membrane pass occupies residues 34–53 (YLSKILMVALLTAMCVVMLT). Over 54–421 (QPPCHRRTPS…GYGPPQAMVL (368 aa)) the chain is Lumenal. Residue 74–105 (HVLVTGGAGYIGSHAALRLLKDSFRVTIVDNL) participates in NAD(+) binding. The active-site Proton acceptor is the tyrosine 222.

The protein belongs to the NAD(P)-dependent epimerase/dehydratase family. NAD(+) is required as a cofactor.

It localises to the golgi apparatus. The protein localises to the golgi stack membrane. The enzyme catalyses UDP-beta-L-arabinopyranose = UDP-alpha-D-xylose. Its pathway is nucleotide-sugar biosynthesis; UDP-L-arabinose biosynthesis; UDP-L-arabinose from UDP-alpha-D-xylose: step 1/1. It participates in cell wall biogenesis; cell wall polysaccharide biosynthesis. The chain is Probable UDP-arabinose 4-epimerase 1 (UEL-1) from Oryza sativa subsp. japonica (Rice).